An 82-amino-acid chain; its full sequence is Small ribosomal subunit protein bS16 (82 aa).

The protein belongs to the bacterial ribosomal protein bS16 family.

The sequence is that of Small ribosomal subunit protein bS16 from Natranaerobius thermophilus (strain ATCC BAA-1301 / DSM 18059 / JW/NM-WN-LF).